The sequence spans 490 residues: Glutamyl-tRNA(Gln) amidotransferase subunit A (490 aa).

Catalysis depends on charge relay system residues Lys-78 and Ser-153. The active-site Acyl-ester intermediate is the Ser-177.

The protein belongs to the amidase family. GatA subfamily. Heterotrimer of A, B and C subunits.

The enzyme catalyses L-glutamyl-tRNA(Gln) + L-glutamine + ATP + H2O = L-glutaminyl-tRNA(Gln) + L-glutamate + ADP + phosphate + H(+). In terms of biological role, allows the formation of correctly charged Gln-tRNA(Gln) through the transamidation of misacylated Glu-tRNA(Gln) in organisms which lack glutaminyl-tRNA synthetase. The reaction takes place in the presence of glutamine and ATP through an activated gamma-phospho-Glu-tRNA(Gln). The protein is Glutamyl-tRNA(Gln) amidotransferase subunit A of Bdellovibrio bacteriovorus (strain ATCC 15356 / DSM 50701 / NCIMB 9529 / HD100).